The chain runs to 434 residues: Methylenetetrahydrofolate--tRNA-(uracil-5-)-methyltransferase TrmFO (434 aa).

Residue 9–14 (GAGLAG) coordinates FAD.

The protein belongs to the MnmG family. TrmFO subfamily. FAD serves as cofactor.

The protein resides in the cytoplasm. The enzyme catalyses uridine(54) in tRNA + (6R)-5,10-methylene-5,6,7,8-tetrahydrofolate + NADH + H(+) = 5-methyluridine(54) in tRNA + (6S)-5,6,7,8-tetrahydrofolate + NAD(+). The catalysed reaction is uridine(54) in tRNA + (6R)-5,10-methylene-5,6,7,8-tetrahydrofolate + NADPH + H(+) = 5-methyluridine(54) in tRNA + (6S)-5,6,7,8-tetrahydrofolate + NADP(+). Its function is as follows. Catalyzes the folate-dependent formation of 5-methyl-uridine at position 54 (M-5-U54) in all tRNAs. The polypeptide is Methylenetetrahydrofolate--tRNA-(uracil-5-)-methyltransferase TrmFO (Listeria welshimeri serovar 6b (strain ATCC 35897 / DSM 20650 / CCUG 15529 / CIP 8149 / NCTC 11857 / SLCC 5334 / V8)).